The chain runs to 401 residues: S-adenosylmethionine synthase (401 aa).

An ATP-binding site is contributed by histidine 16. Aspartate 18 contributes to the Mg(2+) binding site. Position 44 (glutamate 44) interacts with K(+). Residues glutamate 57 and glutamine 109 each coordinate L-methionine. The tract at residues 109–119 (QSAHIAQGVDA) is flexible loop. ATP contacts are provided by residues 174–176 (DAK), aspartate 251, 257–258 (RK), alanine 274, and lysine 278. Aspartate 251 serves as a coordination point for L-methionine. Residue lysine 282 participates in L-methionine binding.

This sequence belongs to the AdoMet synthase family. Homotetramer; dimer of dimers. Requires Mg(2+) as cofactor. It depends on K(+) as a cofactor.

The protein resides in the cytoplasm. The enzyme catalyses L-methionine + ATP + H2O = S-adenosyl-L-methionine + phosphate + diphosphate. It participates in amino-acid biosynthesis; S-adenosyl-L-methionine biosynthesis; S-adenosyl-L-methionine from L-methionine: step 1/1. Its function is as follows. Catalyzes the formation of S-adenosylmethionine (AdoMet) from methionine and ATP. The overall synthetic reaction is composed of two sequential steps, AdoMet formation and the subsequent tripolyphosphate hydrolysis which occurs prior to release of AdoMet from the enzyme. The sequence is that of S-adenosylmethionine synthase from Novosphingobium aromaticivorans (strain ATCC 700278 / DSM 12444 / CCUG 56034 / CIP 105152 / NBRC 16084 / F199).